Reading from the N-terminus, the 661-residue chain is Ubiquitin carboxyl-terminal hydrolase 25 (661 aa).

The USP domain maps to 24-335; it reads LGLRNLGNTC…KAYILFFSRS (312 aa). The active-site Nucleophile is the Cys-33. His-294 acts as the Proton acceptor in catalysis. Disordered stretches follow at residues 387-406 and 449-558; these read GNLASSKPHKFIRPKPRAEQ and FHQD…LCSS. The span at 449–461 shows a compositional bias: basic and acidic residues; it reads FHQDENIAPKANK. 2 stretches are compositionally biased toward polar residues: residues 462-475 and 545-558; these read ENSVSVLPTKVNSG and NGVSTTQSKGLCSS.

It belongs to the peptidase C19 family.

The catalysed reaction is Thiol-dependent hydrolysis of ester, thioester, amide, peptide and isopeptide bonds formed by the C-terminal Gly of ubiquitin (a 76-residue protein attached to proteins as an intracellular targeting signal).. In terms of biological role, recognizes and hydrolyzes the peptide bond at the C-terminal Gly of ubiquitin. Involved in the processing of poly-ubiquitin precursors as well as that of ubiquitinated proteins. The polypeptide is Ubiquitin carboxyl-terminal hydrolase 25 (UBP25) (Arabidopsis thaliana (Mouse-ear cress)).